Reading from the N-terminus, the 380-residue chain is Protein trichome birefringence-like 38 (380 aa).

The chain crosses the membrane as a helical; Signal-anchor for type II membrane protein span at residues 7–29 (SLLLLFLPLLTVTILSGVEQAFA). The GDS motif signature appears at 134-136 (GDS). The DCXHWCLPGXXDXWN motif motif lies at 357–371 (DCSHWCLPGLPDTWN).

It belongs to the PC-esterase family. TBL subfamily.

The protein resides in the membrane. In terms of biological role, may act as a bridging protein that binds pectin and other cell wall polysaccharides. Probably involved in maintaining esterification of pectins. May be involved in the specific O-acetylation of cell wall polymers. This is Protein trichome birefringence-like 38 (TBL38) from Arabidopsis thaliana (Mouse-ear cress).